We begin with the raw amino-acid sequence, 114 residues long: NADH dehydrogenase [ubiquinone] 1 subunit C2, isoform 2 (114 aa).

Residues 56 to 75 form a helical membrane-spanning segment; sequence GLHRQLLYITAFFFAGYYLV.

This sequence belongs to the complex I NDUFC2 subunit family. Complex I is composed of 45 different subunits.

It is found in the mitochondrion inner membrane. Accessory subunit of the mitochondrial membrane respiratory chain NADH dehydrogenase (Complex I), that is believed not to be involved in catalysis. Complex I functions in the transfer of electrons from NADH to the respiratory chain. The immediate electron acceptor for the enzyme is believed to be ubiquinone. This is NADH dehydrogenase [ubiquinone] 1 subunit C2, isoform 2 (NDUFC2-KCTD14) from Homo sapiens (Human).